A 155-amino-acid polypeptide reads, in one-letter code: D-aminoacyl-tRNA deacylase (155 aa).

Positions 147 to 148 (GP) match the Gly-cisPro motif, important for rejection of L-amino acids motif.

It belongs to the DTD family. Homodimer.

The protein localises to the cytoplasm. The catalysed reaction is glycyl-tRNA(Ala) + H2O = tRNA(Ala) + glycine + H(+). The enzyme catalyses a D-aminoacyl-tRNA + H2O = a tRNA + a D-alpha-amino acid + H(+). Its function is as follows. An aminoacyl-tRNA editing enzyme that deacylates mischarged D-aminoacyl-tRNAs. Also deacylates mischarged glycyl-tRNA(Ala), protecting cells against glycine mischarging by AlaRS. Acts via tRNA-based rather than protein-based catalysis; rejects L-amino acids rather than detecting D-amino acids in the active site. By recycling D-aminoacyl-tRNA to D-amino acids and free tRNA molecules, this enzyme counteracts the toxicity associated with the formation of D-aminoacyl-tRNA entities in vivo and helps enforce protein L-homochirality. The protein is D-aminoacyl-tRNA deacylase of Corynebacterium urealyticum (strain ATCC 43042 / DSM 7109).